Here is a 161-residue protein sequence, read N- to C-terminus: Phosphopantetheine adenylyltransferase (161 aa).

Serine 9 serves as a coordination point for substrate. Residues 9–10 (SF) and histidine 17 each bind ATP. Positions 41, 73, and 87 each coordinate substrate. Residues 88–90 (GLR), glutamate 98, and 123–129 (FAHISST) each bind ATP.

Belongs to the bacterial CoaD family. Homohexamer. It depends on Mg(2+) as a cofactor.

The protein resides in the cytoplasm. It catalyses the reaction (R)-4'-phosphopantetheine + ATP + H(+) = 3'-dephospho-CoA + diphosphate. The protein operates within cofactor biosynthesis; coenzyme A biosynthesis; CoA from (R)-pantothenate: step 4/5. Its function is as follows. Reversibly transfers an adenylyl group from ATP to 4'-phosphopantetheine, yielding dephospho-CoA (dPCoA) and pyrophosphate. This Chloroflexus aurantiacus (strain ATCC 29366 / DSM 635 / J-10-fl) protein is Phosphopantetheine adenylyltransferase.